The primary structure comprises 228 residues: Cytidylate kinase (228 aa).

Residue 10–18 coordinates ATP; the sequence is GPSGSGKGT.

This sequence belongs to the cytidylate kinase family. Type 1 subfamily.

It localises to the cytoplasm. It carries out the reaction CMP + ATP = CDP + ADP. The enzyme catalyses dCMP + ATP = dCDP + ADP. This is Cytidylate kinase from Acinetobacter baumannii (strain ACICU).